The sequence spans 158 residues: C-type lectin BML-1 (158 aa).

The first 23 residues, 1–23 (MGHFTFTGLCLLAMFLSLRGAEC), serve as a signal peptide directing secretion. Cystine bridges form between Cys-26-Cys-37, Cys-54-Cys-154, Cys-61-Cys-156, and Cys-129-Cys-146. One can recognise a C-type lectin domain in the interval 33–155 (KNGLCYKVFS…CAALRPFLCQ (123 aa)). Positions 119, 121, and 127 each coordinate Ca(2+). The Galactose-binding motif lies at 119–121 (QPD). The N-linked (GlcNAc...) asparagine glycan is linked to Asn-134. Positions 142 and 143 each coordinate Ca(2+).

This sequence belongs to the true venom lectin family. Homodimer; non-covalently linked. Expressed by the venom gland.

Its subcellular location is the secreted. Its function is as follows. Recombinant C-type lectin BML-1 is able to agglutinate erythrocytes. May be a calcium-dependent lectin. This chain is C-type lectin BML-1, found in Bungarus multicinctus (Many-banded krait).